The primary structure comprises 78 residues: Large ribosomal subunit protein bL28 (78 aa).

This sequence belongs to the bacterial ribosomal protein bL28 family.

In Flavobacterium johnsoniae (strain ATCC 17061 / DSM 2064 / JCM 8514 / BCRC 14874 / CCUG 350202 / NBRC 14942 / NCIMB 11054 / UW101) (Cytophaga johnsonae), this protein is Large ribosomal subunit protein bL28.